The following is a 325-amino-acid chain: MSLLAKIVDGKNLSFEEAYELFNELKGSDGVLIGAYLAALQTKGYTGEELAGLARAMRDSAVKLDLGKVADTAGTGGDGSSTINVSTASALILSAFTRVAKHGNVSITSKSGSANVLEALGLNIRVSPERAREMVESTNFTFIFAPAYHPALRPIMPVRKALGIKTVFNVIGPLANPADPAYQVVGVNSPELLEPVAEALEFLGVERALVVHGSGMDEVSPHRETLVLEVGNGVERYTLSPEDFGIEPVKPLPCSSPEESAARIKAVLGGSGRREDRDFILVNASAALYASGVAEDFREGLEMAREALGQGMLEKLEEIACLSKS.

Residues glycine 74, glycine 77 to aspartate 78, threonine 82, asparagine 84 to threonine 87, lysine 101 to serine 109, and serine 113 each bind 5-phospho-alpha-D-ribose 1-diphosphate. Position 74 (glycine 74) interacts with anthranilate. Serine 86 is a binding site for Mg(2+). Asparagine 104 contributes to the anthranilate binding site. Arginine 159 provides a ligand contact to anthranilate. Mg(2+) is bound by residues aspartate 217 and glutamate 218.

It belongs to the anthranilate phosphoribosyltransferase family. Homodimer. The cofactor is Mg(2+).

It carries out the reaction N-(5-phospho-beta-D-ribosyl)anthranilate + diphosphate = 5-phospho-alpha-D-ribose 1-diphosphate + anthranilate. The protein operates within amino-acid biosynthesis; L-tryptophan biosynthesis; L-tryptophan from chorismate: step 2/5. Its function is as follows. Catalyzes the transfer of the phosphoribosyl group of 5-phosphorylribose-1-pyrophosphate (PRPP) to anthranilate to yield N-(5'-phosphoribosyl)-anthranilate (PRA). The chain is Anthranilate phosphoribosyltransferase from Thermococcus kodakarensis (strain ATCC BAA-918 / JCM 12380 / KOD1) (Pyrococcus kodakaraensis (strain KOD1)).